The primary structure comprises 163 residues: MVTKKSKKAWPWLWFSVLVILLDQLSKYLANHFLSLGHPVKILPFLNFTLNYNTGAAFSFLGTENGWQIIFFAAISFVVSIFLILWLSRTSRSEIMMLLGLSLIIGGALGNFIDRLRWSYVTDFIDFHIKDWHFATFNVADSAICVGVFLLIVHMLLTPSSKP.

Helical transmembrane passes span 9–29 (AWPWLWFSVLVILLDQLSKYL), 42–62 (ILPFLNFTLNYNTGAAFSFLG), 67–87 (WQIIFFAAISFVVSIFLILWL), and 93–113 (SEIMMLLGLSLIIGGALGNFI). Active-site residues include Asp123 and Asp141. Residues 137 to 157 (FNVADSAICVGVFLLIVHMLL) form a helical membrane-spanning segment.

The protein belongs to the peptidase A8 family.

The protein localises to the cell inner membrane. It carries out the reaction Release of signal peptides from bacterial membrane prolipoproteins. Hydrolyzes -Xaa-Yaa-Zaa-|-(S,diacylglyceryl)Cys-, in which Xaa is hydrophobic (preferably Leu), and Yaa (Ala or Ser) and Zaa (Gly or Ala) have small, neutral side chains.. Its pathway is protein modification; lipoprotein biosynthesis (signal peptide cleavage). Its function is as follows. This protein specifically catalyzes the removal of signal peptides from prolipoproteins. This is Lipoprotein signal peptidase from Coxiella burnetii (strain RSA 493 / Nine Mile phase I).